A 737-amino-acid polypeptide reads, in one-letter code: MAKISGLCVFKWYPLYAYQCPATGPSVQLKYSAMTPRHNNNVNHVYNGPDIQWEDESLRPPPAPRLFSRSSYASYASKASKRSFYSYTSSCFEADDERSDTLSFADWITTTMSGRMSPANAGDNSDSYPYGDDTDGDSSSGLPPPRYPGDDTRPTSQKELAGWYAYAFAAEVYVICGIGSFIPILLESLARENGVLLSDRSKPCGSSSDKHTTSAEGQCVVYVLGMEINTASFAMYTFSVSVLLQALLVVSISCAADHGNFRKKLLLAFAWIGSACVMAYIFISKSTYLIGALLAIISNTSFGASFVLLNSFLPLLVRHHPEIDQVGDYGSPGYATTEEGDDEDDEYQEDSTRNSTTALLGSRRYEEGEPLSRVQTTEELTSRELELSTQISAKGIGIGYIAGLFLQCVAIAILITLKNTTWSQRIVLCVIGAWWAIFTIPAAMWLRPRPGPPLPTKSNTGGIRALFHYTIYAWKSLFRTIHLARRLVDIVLFLAGWFLLSDAIATTSSTAILFAKTQLHMEPWALGMINVISTASGILGAFSWSFISRKFRLKAHQTILACIALFELIPLYGLMGYLPFVQAWGVGGLQQPWEMYPLAAIYGFVLGGLSGYCRSLYGELIPPGSEAAFYALYAITDKGSSVFGPAIVGAIIDASGEIRPAFWFLAAIVGTPALFIWFINVERGRTEGEALAEIIEGFKMNGQNGLNGNGADGLADDRRGSDASRAILGRYDDEDEE.

The interval Arg-115–Pro-154 is disordered. A compositionally biased stretch (low complexity) spans Ser-125–Gly-141. A run of 4 helical transmembrane segments spans residues Tyr-166 to Leu-186, Ser-232 to Ile-252, Lys-264 to Ser-284, and Leu-289 to Leu-309. Positions Gly-327–Arg-353 are disordered. Residues Glu-338–Glu-349 are compositionally biased toward acidic residues. The N-linked (GlcNAc...) asparagine glycan is linked to Asn-354. Residues Gly-395–Ile-415 form a helical membrane-spanning segment. N-linked (GlcNAc...) asparagine glycosylation occurs at Asn-419. Helical transmembrane passes span Ile-426–Leu-446, Leu-487–Thr-507, Trp-524–Trp-544, Ile-559–Pro-579, Trp-593–Cys-613, Leu-632–Ile-652, and Ala-661–Val-681.

This sequence belongs to the ATG22 family.

The protein resides in the vacuole membrane. Vacuolar effluxer which mediate the efflux of amino acids resulting from autophagic degradation. The release of autophagic amino acids allows the maintenance of protein synthesis and viability during nitrogen starvation. This Neurospora crassa (strain ATCC 24698 / 74-OR23-1A / CBS 708.71 / DSM 1257 / FGSC 987) protein is Autophagy-related protein 22 (apg-11).